Reading from the N-terminus, the 304-residue chain is Homoserine kinase (304 aa).

90-100 (PLARGLGSSAS) is a binding site for ATP.

The protein belongs to the GHMP kinase family. Homoserine kinase subfamily.

The protein localises to the cytoplasm. It carries out the reaction L-homoserine + ATP = O-phospho-L-homoserine + ADP + H(+). The protein operates within amino-acid biosynthesis; L-threonine biosynthesis; L-threonine from L-aspartate: step 4/5. Catalyzes the ATP-dependent phosphorylation of L-homoserine to L-homoserine phosphate. This chain is Homoserine kinase, found in Staphylococcus aureus (strain NCTC 8325 / PS 47).